Consider the following 86-residue polypeptide: Sodium channel neurotoxin MeuNaTxalpha-4 (86 aa).

Residues 1 to 19 form the signal peptide; that stretch reads MNYLILISFALLVITGVES. Residues 21-85 enclose the LCN-type CS-alpha/beta domain; that stretch reads RDAYIAKPHN…VPIRIPGKCH (65 aa). 4 disulfide bridges follow: Cys31–Cys84, Cys35–Cys57, Cys43–Cys67, and Cys47–Cys69. Residue Arg86 is a propeptide, removed by a carboxypeptidase.

This sequence belongs to the long (4 C-C) scorpion toxin superfamily. Sodium channel inhibitor family. Alpha subfamily. As to expression, expressed by the venom gland.

It is found in the secreted. In terms of biological role, alpha toxins bind voltage-independently at site-3 of sodium channels (Nav) and inhibit the inactivation of the activated channels, thereby blocking neuronal transmission. This toxin inhibits inactivation of drosophila DmNav1 (EC(50)=130 nM). The sequence is that of Sodium channel neurotoxin MeuNaTxalpha-4 from Mesobuthus eupeus (Lesser Asian scorpion).